A 362-amino-acid polypeptide reads, in one-letter code: sn-glycerol-3-phosphate import ATP-binding protein UgpC (362 aa).

Residues 4 to 235 (LSFRNVKKTY…PASTFVAGFI (232 aa)) form the ABC transporter domain. 37 to 44 (GPSGCGKS) contributes to the ATP binding site.

Belongs to the ABC transporter superfamily. sn-glycerol-3-phosphate importer (TC 3.A.1.1.3) family. As to quaternary structure, the complex is composed of two ATP-binding proteins (UgpC), two transmembrane proteins (UgpA and UgpE) and a solute-binding protein (UgpB).

It localises to the cell inner membrane. The enzyme catalyses sn-glycerol 3-phosphate(out) + ATP + H2O = sn-glycerol 3-phosphate(in) + ADP + phosphate + H(+). In terms of biological role, part of the ABC transporter complex UgpBAEC involved in sn-glycerol-3-phosphate (G3P) import. Responsible for energy coupling to the transport system. The protein is sn-glycerol-3-phosphate import ATP-binding protein UgpC of Bordetella parapertussis (strain 12822 / ATCC BAA-587 / NCTC 13253).